Reading from the N-terminus, the 275-residue chain is NAC domain-containing protein 2 (275 aa).

Positions 10-162 constitute an NAC domain; it reads LPPGFRFHPT…DWVLCRIYKK (153 aa). Residues 107–168 mediate DNA binding; that stretch reads VGIKKALVFY…IYKKKNLERA (62 aa).

As to expression, expressed in roots, stem, flowers, and leaves.

The protein resides in the nucleus. Functionally, transcription factor that binds DNA motifs 5'-CGT[AG](5N)NACG[ACT][AC][AT][ACG][ACT]-3' and 5'-CACG[ACT][AC][AT][AGT][CT]-3' in target genes promoters. Promotes leaf senescence (developmental, light-induced and ABA-induced senescence) and regulates fruit yield and sugar content, probably by establishing abscisic acid (ABA) homeostasis. Activates the expression of senescence and ABA associated genes including NCED1, ABCG40, CYP707A2, SAG113, SGR1 and PAO, by directly binding to their promoters. The sequence is that of NAC domain-containing protein 2 from Solanum lycopersicum (Tomato).